A 428-amino-acid polypeptide reads, in one-letter code: Glutamate-1-semialdehyde 2,1-aminomutase (428 aa).

N6-(pyridoxal phosphate)lysine is present on Lys-265.

The protein belongs to the class-III pyridoxal-phosphate-dependent aminotransferase family. HemL subfamily. Homodimer. The cofactor is pyridoxal 5'-phosphate.

Its subcellular location is the cytoplasm. The catalysed reaction is (S)-4-amino-5-oxopentanoate = 5-aminolevulinate. It functions in the pathway porphyrin-containing compound metabolism; protoporphyrin-IX biosynthesis; 5-aminolevulinate from L-glutamyl-tRNA(Glu): step 2/2. This chain is Glutamate-1-semialdehyde 2,1-aminomutase, found in Vesicomyosocius okutanii subsp. Calyptogena okutanii (strain HA).